Here is a 256-residue protein sequence, read N- to C-terminus: 3-dehydroquinate dehydratase (256 aa).

Residues 46–48 (EWR) and Arg-82 contribute to the 3-dehydroquinate site. Catalysis depends on His-144, which acts as the Proton donor/acceptor. The active-site Schiff-base intermediate with substrate is the Lys-171. Arg-213, Ser-232, and Gln-236 together coordinate 3-dehydroquinate.

It belongs to the type-I 3-dehydroquinase family. Homodimer.

It catalyses the reaction 3-dehydroquinate = 3-dehydroshikimate + H2O. The protein operates within metabolic intermediate biosynthesis; chorismate biosynthesis; chorismate from D-erythrose 4-phosphate and phosphoenolpyruvate: step 3/7. Involved in the third step of the chorismate pathway, which leads to the biosynthesis of aromatic amino acids. Catalyzes the cis-dehydration of 3-dehydroquinate (DHQ) and introduces the first double bond of the aromatic ring to yield 3-dehydroshikimate. The sequence is that of 3-dehydroquinate dehydratase from Shouchella clausii (strain KSM-K16) (Alkalihalobacillus clausii).